The sequence spans 612 residues: BTB/POZ domain-containing protein 9 (612 aa).

The region spanning 36–104 is the BTB domain; that stretch reads GDVTFVVEKK…IYTGRATLTD (69 aa). The BACK domain occupies 142 to 240; sequence VCMTFDVASL…SLTELLNVVR (99 aa). The segment at 559 to 612 is disordered; the sequence is QQSTQKEDSSEEPGTGDLSTPSQQLDPHAPRAPSASSLPPSPGPNLHSPNQQNQ. Residues 589 to 612 are compositionally biased toward low complexity; it reads RAPSASSLPPSPGPNLHSPNQQNQ.

As to expression, detected throughout the gray matter of the spinal cord including the motor neurons (at protein level). In the brain, detected in the neurons of the hippocampus and in the Purkinje cells of the cerebellum (at protein level). Also detected in the terospenial cortex, bed nucleus of the stria terminalis (BST) and the ventrolateral thalamus (VL) (at protein level).

This chain is BTB/POZ domain-containing protein 9 (Btbd9), found in Rattus norvegicus (Rat).